We begin with the raw amino-acid sequence, 1687 residues long: Genome polyprotein (1687 aa).

A compositionally biased stretch (polar residues) spans 1-13; it reads MRMATPSSAPSVR. A disordered region spans residues 1–56; sequence MRMATPSSAPSVRNTEKRKNKKASSKASVSFGAPSPLSSESEDEINYMTPPEQEAQ. Residues 1–116 form an interaction with host MAP1LC3A/LC3 region; the sequence is MRMATPSSAP…FRRYPHLRPK (116 aa). Positions 117–341 are interaction with NTPase; sequence EDRPDAPSHA…ISIFGEWQAE (225 aa). The interaction with NS4 stretch occupies residues 244–341; the sequence is SPVQDWNVDP…ISIFGEWQAE (98 aa). 2 host ER membrane association regions span residues 261–292 and 302–341; these read KLRM…KPLN and WTFS…WQAE. Positions 342–518 are interaction with NS1-2, NS4 and homooligomerization; it reads GPFDLALDVV…GKTCFCQNLA (177 aa). Positions 476–641 constitute an SF3 helicase domain; it reads RISMARAAFE…DDARARAPGD (166 aa). 504–511 provides a ligand contact to ATP; sequence GRPGIGKT. Residues 595-700 form an important for mitochondrion targeting region; the sequence is VIIITTNQQT…AVALVHERHD (106 aa). An acidic region spans residues 893 to 898; it reads DEEYDE. O-(5'-phospho-RNA)-tyrosine is present on Tyr-896. Residues 978 to 994 form an interaction with host EIF4G region; the sequence is WADDDRQVDYGEKINFE. The Peptidase C37 domain occupies 995-1172; the sequence is APVSIWSRVV…AATHGEPTLE (178 aa). Active-site for 3CLpro activity residues include His-1024, Asp-1048, and Cys-1133. One can recognise a RdRp catalytic domain in the interval 1416-1537; sequence RYHMDADYTR…STNLELDMVK (122 aa). Residues Asp-1420 and Asp-1422 each coordinate Mg(2+). A disulfide bond links Cys-1482 and Cys-1484. Residues Asp-1524, Glu-1525, and Ser-1569 each coordinate Mg(2+).

As to quaternary structure, homodimer. Interacts with NTPase; this interaction increases the proapoptotic activity of the NTPase and is crucial for the formation of the viral replication complex. Interacts with NS4; this interaction is crucial for the formation of the viral replication complex. Interacts (via N-terminus) with host VAPA. Interacts with host VAPB. In terms of assembly, monomer. Homooligomer. Interacts with NS1-2; this interaction increases the proapoptotic activity of the NTPase and is crucial for the formation of the viral replication complex. Interacts with NS4; this interaction increases the proapoptotic activity of the NTPase. Interacts with host G3BP1; this interaction leads to the redistribution of G3BP1 and its cellular partners to the viral replication complexes, thereby preventing the assembly of stress granules. As to quaternary structure, homodimer. Monomer; in solution. In terms of assembly, interacts with NTPase; this interaction increases the proapoptotic activity of the NTPase. Interacts with NS1-2; this interaction is crucial for the formation of the viral replication complex. Monomer. Interacts with the RNA-directed RNA polymerase; this interaction induces the multimerization of the RdRp and enhances its activity. Interacts with host IEF4E; this interaction plays a role in translation of viral proteins. Interacts (via C-terminus) with host IEF4G1 (via central domain); this interaction plays a role in translation of viral proteins. As to quaternary structure, homohexamer; also forms fibrous hexameric oligomer. Interacts with the viral genome-linked protein; this interaction induces the multimerization of the RdRp and enhances its activity. It depends on Mg(2+) as a cofactor. Requires Mn(2+) as cofactor. In terms of processing, specific enzymatic cleavages in vivo yield mature proteins. 3CLpro is first autocatalytically cleaved, then processes the whole polyprotein. Post-translationally, cleaved by host CASP3/caspase 3 at 18-22 h.p.i. The cleavage allows NS1 secretion, which is essential for intestinal infection and resistance to IFN-lambda. VPg is uridylylated by the polymerase and is covalently attached to the 5'-end of the polyadenylated genomic and subgenomic RNAs. This uridylylated form acts as a nucleotide-peptide primer for the polymerase.

Its subcellular location is the host endoplasmic reticulum membrane. It is found in the secreted. The protein resides in the host endosome membrane. It localises to the host mitochondrion. The protein localises to the host cytoplasm. Its subcellular location is the host perinuclear region. It carries out the reaction a ribonucleoside 5'-triphosphate + H2O = a ribonucleoside 5'-diphosphate + phosphate + H(+). The enzyme catalyses Endopeptidase with a preference for cleavage when the P1 position is occupied by Glu-|-Xaa and the P1' position is occupied by Gly-|-Yaa.. The catalysed reaction is RNA(n) + a ribonucleoside 5'-triphosphate = RNA(n+1) + diphosphate. Its activity is regulated as follows. Inhibited by Suramin, Suramin-related compounds and NF023. Inhibited by PPNDS. Induces the proliferation of the host smooth ER membranes forming long tubular structures. These remodeled membranes probably form the viral factories that contain the replication complex. May play a role in viral replication by interacting with host VAPA, a vesicle-associated membrane protein that plays a role in SNARE-mediated vesicle fusion. This interaction may target replication complex to intracellular membranes. In terms of biological role, promotes intestinal tropism and persistent fecal shedding in strain CR6. This function requires Glu-94 and is present in persistant strains. Its function is as follows. Displays NTPase activity, but probably no helicase activity. Displays RNA chaperone-like activity and destabilizes dsRNA. Induces the formation of convoluted membranes derived from the host ER. These remodeled membranes probably form the viral factories that contain the replication complex. Initiates host cell death by targeting the mitochondrial outer membrane, leading to the permeabilization of mitochondria, programmed host cell death and viral egress. Externalization of host cardiolipin seems to be involved in the process. Probably plays a role in preventing the assembly of host stress granules. Functionally, probable key protein responsible for the formation of membrane alterations by the virus. Induces the formation of convoluted membranes derived from the host ER. These remodeled membranes probably form the viral factories that contain the replication complex. May play a role in targeting replication complex to intracellular membranes. Viral genome-linked protein is covalently linked to the 5'-end of the positive-strand, negative-strand genomic RNAs and subgenomic RNA. Acts as a genome-linked replication primer. May recruit ribosome to viral RNA thereby promoting viral proteins translation. Interacts with host translation initiation complex to allow the translation of viral proteins. Induces the formation of aggregates of RNA-directed RNA polymerase in the presence of RNA. Through its interaction with the viral RNA-directed RNA polymerase, plays a crucial role in enhancing the polymerase activity. In terms of biological role, processes the polyprotein. 3CLpro-RdRp is first released by autocleavage, then all other proteins are cleaved. May cleave host polyadenylate-binding protein thereby inhibiting cellular translation. Does not cleave host G3BP1. Its function is as follows. Replicates genomic and antigenomic RNA by recognizing replications specific signals. Also transcribes a subgenomic mRNA by initiating RNA synthesis internally on antigenomic RNA. This sgRNA codes for structural proteins. Catalyzes the covalent attachment VPg with viral RNAs. This is Genome polyprotein from Norovirus (isolate Mouse/NoV/United States/MNV1/2002/GV) (MNV-1).